The following is a 648-amino-acid chain: Phosphomethylpyrimidine synthase (648 aa).

Substrate contacts are provided by residues N253, M282, Y311, H347, 367–369 (SRG), 408–411 (DGLR), and E447. A Zn(2+)-binding site is contributed by H451. Y474 provides a ligand contact to substrate. A Zn(2+)-binding site is contributed by H515. [4Fe-4S] cluster is bound by residues C595, C598, and C603.

The protein belongs to the ThiC family. As to quaternary structure, homodimer. [4Fe-4S] cluster serves as cofactor.

It catalyses the reaction 5-amino-1-(5-phospho-beta-D-ribosyl)imidazole + S-adenosyl-L-methionine = 4-amino-2-methyl-5-(phosphooxymethyl)pyrimidine + CO + 5'-deoxyadenosine + formate + L-methionine + 3 H(+). The protein operates within cofactor biosynthesis; thiamine diphosphate biosynthesis. Its function is as follows. Catalyzes the synthesis of the hydroxymethylpyrimidine phosphate (HMP-P) moiety of thiamine from aminoimidazole ribotide (AIR) in a radical S-adenosyl-L-methionine (SAM)-dependent reaction. The polypeptide is Phosphomethylpyrimidine synthase (Burkholderia thailandensis (strain ATCC 700388 / DSM 13276 / CCUG 48851 / CIP 106301 / E264)).